Consider the following 424-residue polypeptide: UPF0597 protein Shew185_3080 (424 aa).

The protein belongs to the UPF0597 family.

The polypeptide is UPF0597 protein Shew185_3080 (Shewanella baltica (strain OS185)).